The chain runs to 137 residues: MLQPKRTKFRKQFKGRIHGAAKGGTDLNFGAFGLKALEPERVTARQIEAARRAITRQMKRQGRVWIRVFPDVPVTAKPTEVRMGKGKGSVEFWACRVKPGRIMFEIDGVAEDIAREALRLGAAKLPIKTRFIQRIAE.

It belongs to the universal ribosomal protein uL16 family. Part of the 50S ribosomal subunit.

Binds 23S rRNA and is also seen to make contacts with the A and possibly P site tRNAs. This is Large ribosomal subunit protein uL16 from Chelativorans sp. (strain BNC1).